We begin with the raw amino-acid sequence, 197 residues long: Recombination protein RecR (197 aa).

A C4-type zinc finger spans residues 57–72 (CSVCFGITEDDPCHLC). Positions 79–174 (TTICVVEEPQ…RVTRLAHGIP (96 aa)) constitute a Toprim domain.

This sequence belongs to the RecR family.

In terms of biological role, may play a role in DNA repair. It seems to be involved in an RecBC-independent recombinational process of DNA repair. It may act with RecF and RecO. In Geotalea daltonii (strain DSM 22248 / JCM 15807 / FRC-32) (Geobacter daltonii), this protein is Recombination protein RecR.